Here is an 81-residue protein sequence, read N- to C-terminus: MDPLISAASVIAAGLSVGLASIGPGVGQGTAAGQAVEGIARQPEAEGKIRGTLLLSLAFMEALTIYGLVVALALLFANPFV.

2 helical membrane-spanning segments follow: residues 3–23 (PLIS…ASIG) and 57–77 (LAFM…LLFA).

It belongs to the ATPase C chain family. In terms of assembly, F-type ATPases have 2 components, F(1) - the catalytic core - and F(0) - the membrane proton channel. F(1) has five subunits: alpha(3), beta(3), gamma(1), delta(1), epsilon(1). F(0) has four main subunits: a(1), b(1), b'(1) and c(10-14). The alpha and beta chains form an alternating ring which encloses part of the gamma chain. F(1) is attached to F(0) by a central stalk formed by the gamma and epsilon chains, while a peripheral stalk is formed by the delta, b and b' chains.

Its subcellular location is the plastid. The protein localises to the chloroplast thylakoid membrane. Its function is as follows. F(1)F(0) ATP synthase produces ATP from ADP in the presence of a proton or sodium gradient. F-type ATPases consist of two structural domains, F(1) containing the extramembraneous catalytic core and F(0) containing the membrane proton channel, linked together by a central stalk and a peripheral stalk. During catalysis, ATP synthesis in the catalytic domain of F(1) is coupled via a rotary mechanism of the central stalk subunits to proton translocation. In terms of biological role, key component of the F(0) channel; it plays a direct role in translocation across the membrane. A homomeric c-ring of between 10-14 subunits forms the central stalk rotor element with the F(1) delta and epsilon subunits. In Pinus koraiensis (Korean pine), this protein is ATP synthase subunit c, chloroplastic.